A 1444-amino-acid chain; its full sequence is DNA polymerase III PolC-type (1444 aa).

Residues 421-577 (YVVFDVETTG…ADAEATGYLL (157 aa)) form the Exonuclease domain.

Belongs to the DNA polymerase type-C family. PolC subfamily.

The protein localises to the cytoplasm. It carries out the reaction DNA(n) + a 2'-deoxyribonucleoside 5'-triphosphate = DNA(n+1) + diphosphate. Its function is as follows. Required for replicative DNA synthesis. This DNA polymerase also exhibits 3' to 5' exonuclease activity. This chain is DNA polymerase III PolC-type, found in Lacticaseibacillus paracasei (strain ATCC 334 / BCRC 17002 / CCUG 31169 / CIP 107868 / KCTC 3260 / NRRL B-441) (Lactobacillus paracasei).